Reading from the N-terminus, the 428-residue chain is Putative F-box protein At3g22421 (428 aa).

An F-box domain is found at 4–50; it reads TTTISHLPTELLDEIISRVPLKSTRAVRLTCKNWDSLFKNRSFMKEE.

This Arabidopsis thaliana (Mouse-ear cress) protein is Putative F-box protein At3g22421.